The following is a 343-amino-acid chain: NADH-quinone oxidoreductase subunit H (343 aa).

8 helical membrane passes run 19–39, 89–109, 124–144, 158–178, 198–218, 257–277, 279–299, and 314–334; these read VAWTLVKIMALVVPLMLGVAY, ALFILGPILAIAPALAAWAVI, LLYVMAITSMGVYGVIIAGWA, AAQIVSYEIAMGFALVGVLMA, WYLWPLFPLFVVYLVAGVAET, ILVAALTTLMFLGGWLSPVAF, PDGIVWWLLKTGFVLFLFLWF, and LGWKVFIPITIVWIVFVGGMM.

This sequence belongs to the complex I subunit 1 family. As to quaternary structure, NDH-1 is composed of 14 different subunits. Subunits NuoA, H, J, K, L, M, N constitute the membrane sector of the complex.

It is found in the cell inner membrane. The catalysed reaction is a quinone + NADH + 5 H(+)(in) = a quinol + NAD(+) + 4 H(+)(out). In terms of biological role, NDH-1 shuttles electrons from NADH, via FMN and iron-sulfur (Fe-S) centers, to quinones in the respiratory chain. The immediate electron acceptor for the enzyme in this species is believed to be ubiquinone. Couples the redox reaction to proton translocation (for every two electrons transferred, four hydrogen ions are translocated across the cytoplasmic membrane), and thus conserves the redox energy in a proton gradient. This subunit may bind ubiquinone. The sequence is that of NADH-quinone oxidoreductase subunit H from Thiobacillus denitrificans (strain ATCC 25259 / T1).